We begin with the raw amino-acid sequence, 266 residues long: Proteasome subunit alpha type-1 (266 aa).

The segment at 235-266 is disordered; the sequence is DGFKTRPEDIPAVADNEEDDDELHEQPPDVEE. Residues 249–266 are compositionally biased toward acidic residues; sequence DNEEDDDELHEQPPDVEE.

It belongs to the peptidase T1A family. The 26S proteasome consists of a 20S proteasome core and two 19S regulatory subunits. The 20S proteasome core is composed of 28 subunits that are arranged in four stacked rings, resulting in a barrel-shaped structure. The two end rings are each formed by seven alpha subunits, and the two central rings are each formed by seven beta subunits. The catalytic chamber with the active sites is on the inside of the barrel.

It is found in the cytoplasm. It localises to the nucleus. The proteasome is a multicatalytic proteinase complex which is characterized by its ability to cleave peptides with Arg, Phe, Tyr, Leu, and Glu adjacent to the leaving group at neutral or slightly basic pH. The proteasome has an ATP-dependent proteolytic activity. This Trypanosoma brucei rhodesiense protein is Proteasome subunit alpha type-1.